We begin with the raw amino-acid sequence, 2027 residues long: Citron Rho-interacting kinase (2027 aa).

M1 is subject to N-acetylmethionine. In terms of domain architecture, Protein kinase spans 97–360 (FEVRSLVGCG…FEGLCCHPFF (264 aa)). Residues 103-111 (VGCGHFAEV) and K126 contribute to the ATP site. Residue D221 is the Proton acceptor of the active site. One can recognise an AGC-kinase C-terminal domain in the interval 361 to 431 (SKIDWNNIRN…SKALGILGRS (71 aa)). A phosphoserine mark is found at S433, S440, S480, and S582. A coiled-coil region spans residues 453-1297 (IKSKELQDSQ…SAREEAAHRK (845 aa)). The interaction with Rho/Rac stretch occupies residues 1091–1302 (LAVKEHKAEI…AAHRKATDHP (212 aa)). Residue Y1196 is modified to Phosphotyrosine. Residues 1290–1303 (REEAAHRKATDHPH) are compositionally biased toward basic and acidic residues. 2 disordered regions span residues 1290-1310 (REEA…PATA) and 1322-1351 (SPEH…EFSR). Residues 1327 to 1337 (PSAMSLLAPPS) are compositionally biased toward low complexity. The segment covering 1339-1351 (RRKESSTPEEFSR) has biased composition (basic and acidic residues). The Phorbol-ester/DAG-type zinc finger occupies 1362 to 1411 (PHRFNVGLNMRATKCAVCLDTVHFGRQASKCLECQVMCHPKCSTCLPATC). The region spanning 1443 to 1563 (SLHLEGWMKV…WVTALESVVA (121 aa)) is the PH domain. The 291-residue stretch at 1591–1881 (RLDMNCTLPF…RYLGPAISSG (291 aa)) folds into the CNH domain. K1721 is modified (N6-acetyllysine). A disordered region spans residues 1905–2012 (ESGTEHHRGP…RGRLPAGAVR (108 aa)). S1940 bears the Phosphoserine mark. Residues 1948–2003 (SHPREPSTPHRYREGRTELRRDKSPGRPLEREKSPGRMLSTRRERSPGRLFEDSSR) are compositionally biased toward basic and acidic residues. Positions 1953-1958 (PSTPHR) match the SH3-binding motif. S1993 is modified (phosphoserine). Position 2013 is a phosphothreonine (T2013).

It belongs to the protein kinase superfamily. AGC Ser/Thr protein kinase family. In terms of assembly, directly interacts with KIF14 depending on the activation state (stronger interaction with the kinase-dead form). Homodimer. Interacts with TTC3.

The protein localises to the cytoplasm. It catalyses the reaction L-seryl-[protein] + ATP = O-phospho-L-seryl-[protein] + ADP + H(+). The enzyme catalyses L-threonyl-[protein] + ATP = O-phospho-L-threonyl-[protein] + ADP + H(+). Its function is as follows. Plays a role in cytokinesis. Required for KIF14 localization to the central spindle and midbody. Putative RHO/RAC effector that binds to the GTP-bound forms of RHO and RAC1. It probably binds p21 with a tighter specificity in vivo. Displays serine/threonine protein kinase activity. Plays an important role in the regulation of cytokinesis and the development of the central nervous system. Phosphorylates MYL9/MLC2. This Homo sapiens (Human) protein is Citron Rho-interacting kinase (CIT).